Here is a 160-residue protein sequence, read N- to C-terminus: Cytochrome b6-f complex subunit 4 (160 aa).

3 helical membrane-spanning segments follow: residues 36-56 (LLYI…GLAV), 95-115 (LLGV…PFLE), and 131-151 (TVFL…TLPI).

Belongs to the cytochrome b family. PetD subfamily. The 4 large subunits of the cytochrome b6-f complex are cytochrome b6, subunit IV (17 kDa polypeptide, petD), cytochrome f and the Rieske protein, while the 4 small subunits are petG, petL, petM and petN. The complex functions as a dimer.

It is found in the plastid. Its subcellular location is the chloroplast thylakoid membrane. Component of the cytochrome b6-f complex, which mediates electron transfer between photosystem II (PSII) and photosystem I (PSI), cyclic electron flow around PSI, and state transitions. This is Cytochrome b6-f complex subunit 4 from Gossypium barbadense (Sea Island cotton).